Here is a 499-residue protein sequence, read N- to C-terminus: Glutamate--tRNA ligase (499 aa).

The 'HIGH' region signature appears at P10 to M20. Positions K255–R259 match the 'KMSKS' region motif. ATP is bound at residue K258.

This sequence belongs to the class-I aminoacyl-tRNA synthetase family. Glutamate--tRNA ligase type 1 subfamily. As to quaternary structure, monomer.

Its subcellular location is the cytoplasm. It carries out the reaction tRNA(Glu) + L-glutamate + ATP = L-glutamyl-tRNA(Glu) + AMP + diphosphate. In terms of biological role, catalyzes the attachment of glutamate to tRNA(Glu) in a two-step reaction: glutamate is first activated by ATP to form Glu-AMP and then transferred to the acceptor end of tRNA(Glu). The protein is Glutamate--tRNA ligase of Corynebacterium urealyticum (strain ATCC 43042 / DSM 7109).